The primary structure comprises 458 residues: tRNA modification GTPase MnmE (458 aa).

The (6S)-5-formyl-5,6,7,8-tetrahydrofolate site is built by Arg-30, Glu-90, and Lys-129. Positions 225 to 379 (GLSICLIGCP…LHQTIDTIIW (155 aa)) constitute a TrmE-type G domain. K(+) is bound at residue Asn-235. GTP contacts are provided by residues 235-240 (NVGKSS), 254-260 (SPIPGTT), and 279-282 (DTAG). Position 239 (Ser-239) interacts with Mg(2+). The K(+) site is built by Ser-254, Ile-256, and Thr-259. Thr-260 is a Mg(2+) binding site. A (6S)-5-formyl-5,6,7,8-tetrahydrofolate-binding site is contributed by Lys-458.

Belongs to the TRAFAC class TrmE-Era-EngA-EngB-Septin-like GTPase superfamily. TrmE GTPase family. As to quaternary structure, homodimer. Heterotetramer of two MnmE and two MnmG subunits. The cofactor is K(+).

Its subcellular location is the cytoplasm. In terms of biological role, exhibits a very high intrinsic GTPase hydrolysis rate. Involved in the addition of a carboxymethylaminomethyl (cmnm) group at the wobble position (U34) of certain tRNAs, forming tRNA-cmnm(5)s(2)U34. In Protochlamydia amoebophila (strain UWE25), this protein is tRNA modification GTPase MnmE.